We begin with the raw amino-acid sequence, 460 residues long: MKEIDKYAGKNILVLGLGRSGFAVSKLLLKLGARLTLNDKADLAADPKAKQLADLGVRVIGGSHPVDLFDEEKFDYLVKNPGIPYENPMVAKASEKGVPIITEPEVALSASESPYVCVTGSNGKTTTVMLTQQIMDHYLQKQGHHAYAVGNIGWPISEVVLNQAGPDDLLVVEMSSFQLMGVTDIEPKVAAIVDIYNNVHLDYHKTFDNYVDAKLNVGRFQKTSDYFLANFDQKDILAREEKATKAKILTFSENDPVADFYIGQDYLMHGEEKMMKIADIKLPGIHNLQNSLVAIGISSLMGAGKDDIAAVLSTFTGAEHRLQYVTTLDGVKVYNDSKSTNIEAATVAIQSFKQPEVLLAGGLDRGFVFDSLVDLFKKHVKAIVTYGETRYLLADAARKAGIKTIVVVDNLHEGVKAASKLAEAGDVLLFSPACASWDQFKTFEERGEYFVKYVKELEEK.

Residue 120–126 (GSNGKTT) coordinates ATP.

This sequence belongs to the MurCDEF family.

It localises to the cytoplasm. The catalysed reaction is UDP-N-acetyl-alpha-D-muramoyl-L-alanine + D-glutamate + ATP = UDP-N-acetyl-alpha-D-muramoyl-L-alanyl-D-glutamate + ADP + phosphate + H(+). Its pathway is cell wall biogenesis; peptidoglycan biosynthesis. In terms of biological role, cell wall formation. Catalyzes the addition of glutamate to the nucleotide precursor UDP-N-acetylmuramoyl-L-alanine (UMA). The sequence is that of UDP-N-acetylmuramoylalanine--D-glutamate ligase from Lactobacillus delbrueckii subsp. bulgaricus (strain ATCC BAA-365 / Lb-18).